Reading from the N-terminus, the 302-residue chain is Protein FdhE homolog (302 aa).

It belongs to the FdhE family.

It is found in the cytoplasm. In terms of biological role, necessary for formate dehydrogenase activity. In Shewanella oneidensis (strain ATCC 700550 / JCM 31522 / CIP 106686 / LMG 19005 / NCIMB 14063 / MR-1), this protein is Protein FdhE homolog.